Reading from the N-terminus, the 305-residue chain is Olfactory receptor 4F5 (305 aa).

Residues 1–18 (MVTEFIFLGLSDSQELQT) are Extracellular-facing. Residues 19-42 (FLFMLFFVFYGGIVFGNLLIVITV) form a helical membrane-spanning segment. Topologically, residues 43–50 (VSDSHLHS) are cytoplasmic. A helical transmembrane segment spans residues 51–72 (PMYFLLANLSLIDLSLSSVTAP). At 73–93 (KMITDFFSQRKVISFKGCLVQ) the chain is on the extracellular side. Cys-90 and Cys-182 are joined by a disulfide. A helical membrane pass occupies residues 94-113 (IFLLHFFGGSEMVILIAMGF). Over 114–132 (DRYIAICKPLHYTTIMCGN) the chain is Cytoplasmic. Residues 133–151 (ACVGIMAVTWGIGFLHSVS) form a helical membrane-spanning segment. Over 152-188 (QLAFAVHLLFCGPNEVDSFYCDLPRVIKLACTDTYRL) the chain is Extracellular. A helical membrane pass occupies residues 189 to 212 (DIMVIANSGVLTVCSFVLLIISYT). At 213 to 228 (IILMTIQHRPLDKSSK) the chain is on the cytoplasmic side. The chain crosses the membrane as a helical span at residues 229–251 (ALSTLTAHITVVLLFFGPCVFIY). The Extracellular portion of the chain corresponds to 252 to 262 (AWPFPIKSLDK). A helical membrane pass occupies residues 263–282 (FLAVFYSVITPLLNPIIYTL). The Cytoplasmic segment spans residues 283-305 (RNKDMKTAIRQLRKWDAHSSVKF).

The protein belongs to the G-protein coupled receptor 1 family.

Its subcellular location is the cell membrane. In terms of biological role, odorant receptor. The sequence is that of Olfactory receptor 4F5 (OR4F5) from Homo sapiens (Human).